We begin with the raw amino-acid sequence, 220 residues long: uncharacterized protein (220 aa).

This is an uncharacterized protein from Schizosaccharomyces pombe (strain 972 / ATCC 24843) (Fission yeast).